A 236-amino-acid polypeptide reads, in one-letter code: 3-oxoacyl-[acyl-carrier-protein] reductase (236 aa).

The residue at position 1 (Met1) is an N-acetylmethionine. NADP(+) contacts are provided by residues 11 to 14 and 34 to 35; these read SRGI and RN. Lys40 is modified (N6-acetyllysine). NADP(+) is bound by residues Asp56 and 83-85; that span reads AAG. Lys96 carries the post-translational modification N6-acetyllysine. Residue Ser134 coordinates substrate. Residues Tyr147, Lys151, and 180 to 182 each bind NADP(+); that span reads IRT. The Proton acceptor role is filled by Tyr147. Position 194 is an N6-acetyllysine (Lys194).

Belongs to the short-chain dehydrogenases/reductases (SDR) family. Homotetramer (in vitro). Heterotetramer with HSD17B8; contains two molecules each of HSD17B8 and CBR4. Does not form homotetramers when HSD17B8 is coexpressed, only heterotetramers (in vitro).

It is found in the mitochondrion matrix. It carries out the reaction a (3R)-hydroxyacyl-[ACP] + NADP(+) = a 3-oxoacyl-[ACP] + NADPH + H(+). It catalyses the reaction a quinone + NADPH + H(+) = a quinol + NADP(+). Its pathway is lipid metabolism; fatty acid biosynthesis. Functionally, component of the heterotetramer complex KAR (3-ketoacyl-[acyl carrier protein] reductase or 3-ketoacyl-[ACP] reductase) that forms part of the mitochondrial fatty acid synthase (mtFAS). Beta-subunit of the KAR heterotetramer complex, responsible for the 3-ketoacyl-ACP reductase activity of the mtFAS, reduces 3-oxoacyl-[ACP] to (3R)-hydroxyacyl-[ACP] in a NADPH-dependent manner with no chain length preference, thereby participating in mitochondrial fatty acid biosynthesis. The homotetramer has NADPH-dependent quinone reductase activity (in vitro), hence could play a role in protection against cytotoxicity of exogenous quinones. As a heterotetramer, it can also reduce 9,10-phenanthrenequinone, 1,4-benzoquinone and various other o-quinones and p-quinones (in vitro). This is 3-oxoacyl-[acyl-carrier-protein] reductase (Cbr4) from Mus musculus (Mouse).